The primary structure comprises 104 residues: Large ribosomal subunit protein uL24 (104 aa).

Belongs to the universal ribosomal protein uL24 family. As to quaternary structure, part of the 50S ribosomal subunit.

In terms of biological role, one of two assembly initiator proteins, it binds directly to the 5'-end of the 23S rRNA, where it nucleates assembly of the 50S subunit. One of the proteins that surrounds the polypeptide exit tunnel on the outside of the subunit. This is Large ribosomal subunit protein uL24 from Yersinia pseudotuberculosis serotype O:1b (strain IP 31758).